The following is a 590-amino-acid chain: Myo-inositol transporter 3A (590 aa).

Over 1–57 (MSATHIENRDDSFLENKGIDHIGRPENNNGSQEPPSPSGFGGHLIDENLVRVEGEDK) the chain is Cytoplasmic. Basic and acidic residues predominate over residues 15-24 (ENKGIDHIGR). Residues 15 to 40 (ENKGIDHIGRPENNNGSQEPPSPSGF) are disordered. A helical transmembrane segment spans residues 58-78 (VTWYLCFLISASAIAGFLFGY). Topologically, residues 79-105 (DTGVVGVALPLVGTDLGGSALNSSQQE) are extracellular. An N-linked (GlcNAc...) asparagine glycan is attached at N100. A helical membrane pass occupies residues 106–126 (IITAGTTIGAIFGSAILGGWG). Over 127–132 (DRLGRK) the chain is Cytoplasmic. A helical transmembrane segment spans residues 133–153 (GAILVSDVFFTIGAVIIASSY). The Extracellular portion of the chain corresponds to 154–157 (SVPQ). The chain crosses the membrane as a helical span at residues 158 to 178 (IIVGRIILGIGVGGAAVIAPL). At 179–192 (FITETAPTAVRGRC) the chain is on the cytoplasmic side. The chain crosses the membrane as a helical span at residues 193–213 (IGVNAFFIPFGQVVSDAIGAG). Over 214 to 222 (VQNMHNGWR) the chain is Extracellular. The helical transmembrane segment at 223–243 (LLFALGAVPSLLQLLLFHYLP) threads the bilayer. The Cytoplasmic segment spans residues 244–325 (ESPRILILKG…AVSALQAAGQ (82 aa)). A helical membrane pass occupies residues 326 to 346 (LTGFNTLLYYAGTLFGLLGLS). Over 347-349 (NPA) the chain is Extracellular. The chain crosses the membrane as a helical span at residues 350 to 370 (LGGLIPAGTNAVFVLIGMSLV). Topologically, residues 371-376 (DKVGRR) are cytoplasmic. Residues 377-397 (GLLLIGVPIMLLGHVWNIVSF) traverse the membrane as a helical segment. Over 398-420 (YYMCKPTGGFLDTSYSYDTTDVG) the chain is Extracellular. The chain crosses the membrane as a helical span at residues 421–441 (IVIGGIVFFVVGYGLTYSHLV). Residues 442 to 455 (WYQAEYLTLEVRSM) are Cytoplasmic-facing. Residues 456–476 (GSGIATTVCWIANLVVSVSYL) form a helical membrane-spanning segment. Topologically, residues 477 to 485 (SELETMTPS) are extracellular. The chain crosses the membrane as a helical span at residues 486–506 (GTYGFYFGISVIGFVFLVFCL). At 507-590 (PETKQLSIDE…GGKRTPSASV (84 aa)) the chain is on the cytoplasmic side.

It belongs to the major facilitator superfamily. Sugar transporter (TC 2.A.1.1) family.

It localises to the cell membrane. It catalyses the reaction myo-inositol(out) + H(+)(out) = myo-inositol(in) + H(+)(in). In terms of biological role, transporter for myo-inositol. The polypeptide is Myo-inositol transporter 3A (ITR3A) (Cryptococcus neoformans var. grubii serotype A (strain H99 / ATCC 208821 / CBS 10515 / FGSC 9487) (Filobasidiella neoformans var. grubii)).